The following is a 431-amino-acid chain: Glutamate-1-semialdehyde 2,1-aminomutase 2 (431 aa).

K268 is modified (N6-(pyridoxal phosphate)lysine).

Belongs to the class-III pyridoxal-phosphate-dependent aminotransferase family. HemL subfamily. In terms of assembly, homodimer. It depends on pyridoxal 5'-phosphate as a cofactor.

The protein localises to the cytoplasm. It carries out the reaction (S)-4-amino-5-oxopentanoate = 5-aminolevulinate. It functions in the pathway porphyrin-containing compound metabolism; protoporphyrin-IX biosynthesis; 5-aminolevulinate from L-glutamyl-tRNA(Glu): step 2/2. The protein is Glutamate-1-semialdehyde 2,1-aminomutase 2 of Anoxybacillus flavithermus (strain DSM 21510 / WK1).